The chain runs to 298 residues: HTH-type transcriptional regulator ArgP (298 aa).

The region spanning 4 to 60 (LDYKWIEALDAVVAQGGFERAAEELYISQSAVSQRIKQLERFLAQPVLIREQPPKPT) is the HTH lysR-type domain. The H-T-H motif DNA-binding region spans 21–40 (FERAAEELYISQSAVSQRIK).

This sequence belongs to the LysR transcriptional regulatory family. In terms of assembly, homodimer.

In terms of biological role, controls the transcription of genes involved in arginine and lysine metabolism. This Vibrio vulnificus (strain CMCP6) protein is HTH-type transcriptional regulator ArgP.